We begin with the raw amino-acid sequence, 79 residues long: Small ribosomal subunit protein bS18 (79 aa).

This sequence belongs to the bacterial ribosomal protein bS18 family. In terms of assembly, part of the 30S ribosomal subunit. Forms a tight heterodimer with protein bS6.

Functionally, binds as a heterodimer with protein bS6 to the central domain of the 16S rRNA, where it helps stabilize the platform of the 30S subunit. This Pseudarthrobacter chlorophenolicus (strain ATCC 700700 / DSM 12829 / CIP 107037 / JCM 12360 / KCTC 9906 / NCIMB 13794 / A6) (Arthrobacter chlorophenolicus) protein is Small ribosomal subunit protein bS18.